Reading from the N-terminus, the 427-residue chain is Acyl-CoA hydrolase 2 (427 aa).

15 to 83 contributes to the a nucleoside 3',5'-cyclic phosphate binding site; sequence LLQKLPSSSL…FLLKQYDYFG (69 aa). Residues Asp337, Ser359, and Gln409 each act as charge relay system in the active site. The Microbody targeting signal motif lies at 425-427; that stretch reads SKL.

It belongs to the C/M/P thioester hydrolase family. As to quaternary structure, homotetramer. Mostly expressed in leaves and flowers, and, to a lower extent, in seedlings and siliques.

It localises to the peroxisome matrix. It carries out the reaction a fatty acyl-CoA + H2O = a fatty acid + CoA + H(+). It catalyses the reaction dodecanoyl-CoA + H2O = dodecanoate + CoA + H(+). The catalysed reaction is tetradecanoyl-CoA + H2O = tetradecanoate + CoA + H(+). The enzyme catalyses octadecanoyl-CoA + H2O = octadecanoate + CoA + H(+). It carries out the reaction (9Z)-hexadecenoyl-CoA + H2O = (9Z)-hexadecenoate + CoA + H(+). It catalyses the reaction (5Z,8Z,11Z,14Z)-eicosatetraenoyl-CoA + H2O = (5Z,8Z,11Z,14Z)-eicosatetraenoate + CoA + H(+). The catalysed reaction is hexadecanoyl-CoA + H2O = hexadecanoate + CoA + H(+). The enzyme catalyses (9Z)-octadecenoyl-CoA + H2O = (9Z)-octadecenoate + CoA + H(+). It carries out the reaction (9Z,12Z)-octadecadienoyl-CoA + H2O = (9Z,12Z)-octadecadienoate + CoA + H(+). Its pathway is lipid metabolism; fatty acid metabolism. Insensitive to feedback inhibition by free coenzyme A (CoASH). Functionally, catalyzes the hydrolysis of acyl-CoAs into free fatty acids and coenzyme A (CoASH), regulating their respective intracellular levels. Active with both medium chain and long chain acyl-CoAs (e.g. 12:0-CoA, 14:0-CoA, 16:0-CoA, 18:0-CoA, 16:1-CoA, 18:1-CoA, 18:2-CoA and 20:4-CoA) as substrates, palmitoleoyl-CoA (16:1-CoA) being the favorite substrate. This is Acyl-CoA hydrolase 2 from Arabidopsis thaliana (Mouse-ear cress).